Consider the following 210-residue polypeptide: Riboflavin kinase (210 aa).

Over residues 1–11 (MRPSNPRPPVT) the composition is skewed to pro residues. The interval 1–24 (MRPSNPRPPVTGPDSGPEAPFPIR) is disordered. Mg(2+) is bound by residues Thr-44 and Asn-46. Catalysis depends on Glu-113, which acts as the Nucleophile.

The protein belongs to the flavokinase family. The cofactor is Zn(2+). It depends on Mg(2+) as a cofactor.

It catalyses the reaction riboflavin + ATP = FMN + ADP + H(+). It functions in the pathway cofactor biosynthesis; FMN biosynthesis; FMN from riboflavin (ATP route): step 1/1. Functionally, catalyzes the phosphorylation of riboflavin (vitamin B2) to form flavin mononucleotide (FMN) coenzyme. The polypeptide is Riboflavin kinase (fmn1) (Emericella nidulans (strain FGSC A4 / ATCC 38163 / CBS 112.46 / NRRL 194 / M139) (Aspergillus nidulans)).